Consider the following 78-residue polypeptide: Small ribosomal subunit protein bS18 (78 aa).

This sequence belongs to the bacterial ribosomal protein bS18 family. As to quaternary structure, part of the 30S ribosomal subunit. Forms a tight heterodimer with protein bS6.

Binds as a heterodimer with protein bS6 to the central domain of the 16S rRNA, where it helps stabilize the platform of the 30S subunit. This is Small ribosomal subunit protein bS18 from Parafrankia sp. (strain EAN1pec).